A 157-amino-acid polypeptide reads, in one-letter code: 2-C-methyl-D-erythritol 2,4-cyclodiphosphate synthase (157 aa).

A divalent metal cation-binding residues include aspartate 9 and histidine 11. Residues 9–11 (DVH) and 35–36 (HS) each bind 4-CDP-2-C-methyl-D-erythritol 2-phosphate. A divalent metal cation is bound at residue histidine 43. 4-CDP-2-C-methyl-D-erythritol 2-phosphate is bound by residues 57–59 (DIG), 62–66 (FPDTD), 101–107 (AEKPKMA), 133–136 (TTTE), phenylalanine 140, and arginine 143.

Belongs to the IspF family. In terms of assembly, homotrimer. It depends on a divalent metal cation as a cofactor.

It catalyses the reaction 4-CDP-2-C-methyl-D-erythritol 2-phosphate = 2-C-methyl-D-erythritol 2,4-cyclic diphosphate + CMP. It functions in the pathway isoprenoid biosynthesis; isopentenyl diphosphate biosynthesis via DXP pathway; isopentenyl diphosphate from 1-deoxy-D-xylulose 5-phosphate: step 4/6. Its function is as follows. Involved in the biosynthesis of isopentenyl diphosphate (IPP) and dimethylallyl diphosphate (DMAPP), two major building blocks of isoprenoid compounds. Catalyzes the conversion of 4-diphosphocytidyl-2-C-methyl-D-erythritol 2-phosphate (CDP-ME2P) to 2-C-methyl-D-erythritol 2,4-cyclodiphosphate (ME-CPP) with a corresponding release of cytidine 5-monophosphate (CMP). The polypeptide is 2-C-methyl-D-erythritol 2,4-cyclodiphosphate synthase (Listeria monocytogenes serotype 4b (strain CLIP80459)).